The following is a 185-amino-acid chain: Avirulence protein ATR39-1 (185 aa).

A signal peptide spans 1–20 (MVKCTPLLALTVIVSAGSDA). The RxLR-dEER signature appears at 49–66 (RVLRASDVPDEVAAGESR).

Belongs to the RxLR effector family.

It is found in the secreted. Its subcellular location is the host cell. Secreted effector that acts as an elicitor of hypersensitive response (HR) specifically on plants carrying defense protein RPP39. The allele ATR39-1 is recognized by RPP39, whereas the ATR39-2 allele is not recognized. The protein is Avirulence protein ATR39-1 of Hyaloperonospora arabidopsidis (strain Emoy2) (Downy mildew agent).